Reading from the N-terminus, the 469-residue chain is tRNA (cytosine(72)-C(5))-methyltransferase NSUN6 (469 aa).

One can recognise a PUA domain in the interval 111–203 (QCEAIVGAQC…MGIRMTEPVY (93 aa)). Residues 242–248 (CAAPGGK), D266, D293, and D323 contribute to the S-adenosyl-L-methionine site. The Nucleophile role is filled by C373. K419 bears the N6-acetyllysine mark.

It belongs to the class I-like SAM-binding methyltransferase superfamily. RsmB/NOP family.

It localises to the cytoplasm. It catalyses the reaction cytidine(72) in tRNA(Thr) + S-adenosyl-L-methionine = 5-methylcytidine(72) in tRNA(Thr) + S-adenosyl-L-homocysteine + H(+). It carries out the reaction cytidine(72) in tRNA(Cys) + S-adenosyl-L-methionine = 5-methylcytidine(72) in tRNA(Cys) + S-adenosyl-L-homocysteine + H(+). In terms of biological role, S-adenosyl-L-methionine-dependent methyltransferase that specifically methylates the C5 position of cytosine 72 in tRNA(Thr)(TGT) and tRNA(Cys)(GCA). In vitro also methylates tRNA(Thr)(AGT). Methylation requires, in the acceptor stem region, the presence of the 3'-CCA terminus, the target site C72, the discriminator base U73, and the second and third base pairs (2:71 and 3:70) in the tRNA substrates. This is tRNA (cytosine(72)-C(5))-methyltransferase NSUN6 from Homo sapiens (Human).